The sequence spans 521 residues: Non-specific phospholipase C5 (521 aa).

Over residues 478–487 (SKKARERGGD) the composition is skewed to basic and acidic residues. A disordered region spans residues 478-521 (SKKARERGGDENDIVFCVDDDDDHNVVKPPPSQSEPSHATPWSN). Over residues 511-521 (SEPSHATPWSN) the composition is skewed to polar residues.

It belongs to the bacterial phospholipase C family. As to expression, specifically expressed in flowers.

The protein localises to the cytoplasm. The protein resides in the cytosol. The enzyme catalyses a 1,2-diacyl-sn-glycero-3-phosphocholine + H2O = phosphocholine + a 1,2-diacyl-sn-glycerol + H(+). In terms of biological role, non-specific phospholipase C (PLC) which assumes minor PLC activity during inorganic phosphate starvation. Can hydrolyze both phosphatidylcholine (PC) and phosphatidylethanolamine (PE). Required for normal accumulation of digalactosyldiacylglycerol (DGDG) during phosphate limitation and may contribute to the conversion of phospholipids to diacylglycerol, the substrate for galactolipid synthesis. The sequence is that of Non-specific phospholipase C5 (NPC5) from Arabidopsis thaliana (Mouse-ear cress).